A 355-amino-acid chain; its full sequence is Holliday junction branch migration complex subunit RuvB (355 aa).

Residues Thr4–Tyr190 are large ATPase domain (RuvB-L). Residues Leu29, Arg30, Gly71, Lys74, Thr75, Thr76, Glu137 to Tyr139, Arg180, Tyr190, and Arg227 contribute to the ATP site. Thr75 is a binding site for Mg(2+). Residues Asn191–Asp261 form a small ATPAse domain (RuvB-S) region. Residues Ala264–Thr355 are head domain (RuvB-H). Positions 300, 319, and 324 each coordinate DNA.

Belongs to the RuvB family. As to quaternary structure, homohexamer. Forms an RuvA(8)-RuvB(12)-Holliday junction (HJ) complex. HJ DNA is sandwiched between 2 RuvA tetramers; dsDNA enters through RuvA and exits via RuvB. An RuvB hexamer assembles on each DNA strand where it exits the tetramer. Each RuvB hexamer is contacted by two RuvA subunits (via domain III) on 2 adjacent RuvB subunits; this complex drives branch migration. In the full resolvosome a probable DNA-RuvA(4)-RuvB(12)-RuvC(2) complex forms which resolves the HJ.

Its subcellular location is the cytoplasm. It carries out the reaction ATP + H2O = ADP + phosphate + H(+). In terms of biological role, the RuvA-RuvB-RuvC complex processes Holliday junction (HJ) DNA during genetic recombination and DNA repair, while the RuvA-RuvB complex plays an important role in the rescue of blocked DNA replication forks via replication fork reversal (RFR). RuvA specifically binds to HJ cruciform DNA, conferring on it an open structure. The RuvB hexamer acts as an ATP-dependent pump, pulling dsDNA into and through the RuvAB complex. RuvB forms 2 homohexamers on either side of HJ DNA bound by 1 or 2 RuvA tetramers; 4 subunits per hexamer contact DNA at a time. Coordinated motions by a converter formed by DNA-disengaged RuvB subunits stimulates ATP hydrolysis and nucleotide exchange. Immobilization of the converter enables RuvB to convert the ATP-contained energy into a lever motion, pulling 2 nucleotides of DNA out of the RuvA tetramer per ATP hydrolyzed, thus driving DNA branch migration. The RuvB motors rotate together with the DNA substrate, which together with the progressing nucleotide cycle form the mechanistic basis for DNA recombination by continuous HJ branch migration. Branch migration allows RuvC to scan DNA until it finds its consensus sequence, where it cleaves and resolves cruciform DNA. The polypeptide is Holliday junction branch migration complex subunit RuvB (Paraburkholderia xenovorans (strain LB400)).